We begin with the raw amino-acid sequence, 266 residues long: UPF0354 protein lin1649 (266 aa).

This sequence belongs to the UPF0354 family.

In Listeria innocua serovar 6a (strain ATCC BAA-680 / CLIP 11262), this protein is UPF0354 protein lin1649.